The sequence spans 37 residues: Hemocyanin subunit B (37 aa).

Belongs to the tyrosinase family. Hemocyanin subfamily. As to expression, hemolymph.

The protein resides in the secreted. Its subcellular location is the extracellular space. In terms of biological role, hemocyanins are copper-containing oxygen carriers occurring freely dissolved in the hemolymph of many mollusks and arthropods. The sequence is that of Hemocyanin subunit B from Cancer pagurus (Rock crab).